The sequence spans 301 residues: Homoserine O-acetyltransferase (301 aa).

C142 (acyl-thioester intermediate) is an active-site residue. Substrate-binding residues include K163 and S192. Residue H235 is the Proton acceptor of the active site. E237 is a catalytic residue. Residue R249 participates in substrate binding.

The protein belongs to the MetA family.

Its subcellular location is the cytoplasm. The catalysed reaction is L-homoserine + acetyl-CoA = O-acetyl-L-homoserine + CoA. Its pathway is amino-acid biosynthesis; L-methionine biosynthesis via de novo pathway; O-acetyl-L-homoserine from L-homoserine: step 1/1. Its function is as follows. Transfers an acetyl group from acetyl-CoA to L-homoserine, forming acetyl-L-homoserine. The chain is Homoserine O-acetyltransferase from Bacillus anthracis (strain A0248).